We begin with the raw amino-acid sequence, 348 residues long: Mannonate dehydratase (348 aa).

This sequence belongs to the mannonate dehydratase family. Fe(2+) serves as cofactor. The cofactor is Mn(2+).

The enzyme catalyses D-mannonate = 2-dehydro-3-deoxy-D-gluconate + H2O. The protein operates within carbohydrate metabolism; pentose and glucuronate interconversion. Functionally, catalyzes the dehydration of D-mannonate. The protein is Mannonate dehydratase of Streptococcus agalactiae serotype III (strain NEM316).